A 1902-amino-acid chain; its full sequence is PII-type proteinase (1902 aa).

A signal peptide spans 1 to 33 (MQRKKKGLSILLAGTVALGALAVLPVGEIQAKA). Positions 34–187 (AISQQTKVSS…VTLAKVYYPT (154 aa)) are excised as a propeptide. The 507-residue stretch at 191–697 (ANSMANVQAV…AGLVDVKAAI (507 aa)) folds into the Peptidase S8 domain. Catalysis depends on charge relay system residues Asp-217, His-281, and Ser-620. Residues 1793–1805 (KTAGKGDDTTGTS) show a composition bias toward low complexity. Residues 1793–1872 (KTAGKGDDTT…GKGALPKTAE (80 aa)) form a disordered region. An LPXTG sorting signal motif is present at residues 1867 to 1871 (LPKTA). Thr-1870 carries the post-translational modification Pentaglycyl murein peptidoglycan amidated threonine. Positions 1871–1902 (AETTERPAFGFLGVIVVSLMGVLGLKRKQREE) are cleaved as a propeptide — removed by sortase.

This sequence belongs to the peptidase S8 family.

It is found in the secreted. Its subcellular location is the cell wall. The enzyme catalyses Endopeptidase activity with very broad specificity, although some subsite preference have been noted, e.g. large hydrophobic residues in the P1 and P4 positions, and Pro in the P2 position. Best known for its action on caseins, although it has been shown to hydrolyze hemoglobin and oxidized insulin B-chain.. Protease which breaks down milk proteins during the growth of the bacteria on milk. In Lacticaseibacillus paracasei (Lactobacillus paracasei), this protein is PII-type proteinase (prtP).